A 57-amino-acid polypeptide reads, in one-letter code: Putative secreted protein ML2569.1 (57 aa).

An N-terminal signal peptide occupies residues Met-1–Gln-32. The tract at residues Thr-34–Thr-57 is disordered.

The chain is Putative secreted protein ML2569.1 from Mycobacterium leprae (strain TN).